The primary structure comprises 344 residues: RNA 3'-terminal phosphate cyclase (344 aa).

Residues glutamine 103 and 283–287 (HLADQ) each bind ATP. Catalysis depends on histidine 308, which acts as the Tele-AMP-histidine intermediate.

This sequence belongs to the RNA 3'-terminal cyclase family. Type 1 subfamily.

It is found in the cytoplasm. It catalyses the reaction a 3'-end 3'-phospho-ribonucleotide-RNA + ATP = a 3'-end 2',3'-cyclophospho-ribonucleotide-RNA + AMP + diphosphate. Its function is as follows. Catalyzes the conversion of 3'-phosphate to a 2',3'-cyclic phosphodiester at the end of RNA. The mechanism of action of the enzyme occurs in 3 steps: (A) adenylation of the enzyme by ATP; (B) transfer of adenylate to an RNA-N3'P to produce RNA-N3'PP5'A; (C) and attack of the adjacent 2'-hydroxyl on the 3'-phosphorus in the diester linkage to produce the cyclic end product. The biological role of this enzyme is unknown but it is likely to function in some aspects of cellular RNA processing. This Salmonella paratyphi C (strain RKS4594) protein is RNA 3'-terminal phosphate cyclase.